Reading from the N-terminus, the 554-residue chain is Methyl-coenzyme M reductase II subunit alpha (554 aa).

Glutamine 151 lines the coenzyme F430 pocket. Coenzyme B-binding positions include arginine 229, 260-261, and arginine 274; that span reads KH. The coenzyme M site is built by tyrosine 336 and tyrosine 447.

It belongs to the methyl-coenzyme M reductase alpha subunit family. MCR is a hexamer of two alpha, two beta, and two gamma chains, forming a dimer of heterotrimers. Requires coenzyme F430 as cofactor.

It catalyses the reaction coenzyme B + methyl-coenzyme M = methane + coenzyme M-coenzyme B heterodisulfide. The protein operates within one-carbon metabolism; methyl-coenzyme M reduction; methane from methyl-coenzyme M: step 1/1. In terms of biological role, component of the methyl-coenzyme M reductase (MCR) I that catalyzes the reductive cleavage of methyl-coenzyme M (CoM-S-CH3 or 2-(methylthio)ethanesulfonate) using coenzyme B (CoB or 7-mercaptoheptanoylthreonine phosphate) as reductant which results in the production of methane and the mixed heterodisulfide of CoB and CoM (CoM-S-S-CoB). This is the final step in methanogenesis. This Methanothermus fervidus (strain ATCC 43054 / DSM 2088 / JCM 10308 / V24 S) protein is Methyl-coenzyme M reductase II subunit alpha (mrtA).